Reading from the N-terminus, the 658-residue chain is Threonine--tRNA ligase (658 aa).

The region spanning 1–64 (MSCSISLSFP…GQSGQVEIIT (64 aa)) is the TGS domain. Residues 246 to 549 (DHRRLGREMD…LIENFAGHMP (304 aa)) form a catalytic region. Positions 343, 394, and 526 each coordinate Zn(2+).

The protein belongs to the class-II aminoacyl-tRNA synthetase family. As to quaternary structure, homodimer. The cofactor is Zn(2+).

Its subcellular location is the cytoplasm. It catalyses the reaction tRNA(Thr) + L-threonine + ATP = L-threonyl-tRNA(Thr) + AMP + diphosphate + H(+). Its function is as follows. Catalyzes the attachment of threonine to tRNA(Thr) in a two-step reaction: L-threonine is first activated by ATP to form Thr-AMP and then transferred to the acceptor end of tRNA(Thr). Also edits incorrectly charged L-seryl-tRNA(Thr). The sequence is that of Threonine--tRNA ligase from Bartonella tribocorum (strain CIP 105476 / IBS 506).